Reading from the N-terminus, the 391-residue chain is Chorismate synthase (391 aa).

Residue Arg-48 coordinates NADP(+). FMN contacts are provided by residues 126–128 (RAS), Gly-286, 301–305 (KPTSS), and Arg-328.

It belongs to the chorismate synthase family. Requires FMNH2 as cofactor.

The enzyme catalyses 5-O-(1-carboxyvinyl)-3-phosphoshikimate = chorismate + phosphate. It participates in metabolic intermediate biosynthesis; chorismate biosynthesis; chorismate from D-erythrose 4-phosphate and phosphoenolpyruvate: step 7/7. Functionally, catalyzes the anti-1,4-elimination of the C-3 phosphate and the C-6 proR hydrogen from 5-enolpyruvylshikimate-3-phosphate (EPSP) to yield chorismate, which is the branch point compound that serves as the starting substrate for the three terminal pathways of aromatic amino acid biosynthesis. This reaction introduces a second double bond into the aromatic ring system. The protein is Chorismate synthase of Saccharolobus islandicus (strain Y.N.15.51 / Yellowstone #2) (Sulfolobus islandicus).